The following is a 262-amino-acid chain: Acyl-[acyl-carrier-protein]--UDP-N-acetylglucosamine O-acyltransferase (262 aa).

This sequence belongs to the transferase hexapeptide repeat family. LpxA subfamily. Homotrimer.

It localises to the cytoplasm. The catalysed reaction is a (3R)-hydroxyacyl-[ACP] + UDP-N-acetyl-alpha-D-glucosamine = a UDP-3-O-[(3R)-3-hydroxyacyl]-N-acetyl-alpha-D-glucosamine + holo-[ACP]. It functions in the pathway glycolipid biosynthesis; lipid IV(A) biosynthesis; lipid IV(A) from (3R)-3-hydroxytetradecanoyl-[acyl-carrier-protein] and UDP-N-acetyl-alpha-D-glucosamine: step 1/6. Its function is as follows. Involved in the biosynthesis of lipid A, a phosphorylated glycolipid that anchors the lipopolysaccharide to the outer membrane of the cell. This is Acyl-[acyl-carrier-protein]--UDP-N-acetylglucosamine O-acyltransferase from Histophilus somni (strain 129Pt) (Haemophilus somnus).